Here is a 427-residue protein sequence, read N- to C-terminus: Phosphoglucosamine mutase (427 aa).

Catalysis depends on Ser94, which acts as the Phosphoserine intermediate. Residues Ser94, Asp228, Asp230, and Asp232 each contribute to the Mg(2+) site. A Phosphoserine modification is found at Ser94.

This sequence belongs to the phosphohexose mutase family. Requires Mg(2+) as cofactor. Activated by phosphorylation.

It catalyses the reaction alpha-D-glucosamine 1-phosphate = D-glucosamine 6-phosphate. Its function is as follows. Catalyzes the conversion of glucosamine-6-phosphate to glucosamine-1-phosphate. The sequence is that of Phosphoglucosamine mutase from Thermotoga sp. (strain RQ2).